Here is a 241-residue protein sequence, read N- to C-terminus: Small ribosomal subunit protein uS2 (241 aa).

It belongs to the universal ribosomal protein uS2 family.

This Cronobacter sakazakii (strain ATCC BAA-894) (Enterobacter sakazakii) protein is Small ribosomal subunit protein uS2.